The following is a 684-amino-acid chain: DNA-directed RNA polymerase subunit beta' (684 aa).

Residues Cys69, Cys71, Cys87, and Cys90 each contribute to the Zn(2+) site. Positions 489, 491, and 493 each coordinate Mg(2+).

It belongs to the RNA polymerase beta' chain family. RpoC1 subfamily. In terms of assembly, in plastids the minimal PEP RNA polymerase catalytic core is composed of four subunits: alpha, beta, beta', and beta''. When a (nuclear-encoded) sigma factor is associated with the core the holoenzyme is formed, which can initiate transcription. Mg(2+) serves as cofactor. It depends on Zn(2+) as a cofactor.

It is found in the plastid. The protein resides in the chloroplast. The catalysed reaction is RNA(n) + a ribonucleoside 5'-triphosphate = RNA(n+1) + diphosphate. DNA-dependent RNA polymerase catalyzes the transcription of DNA into RNA using the four ribonucleoside triphosphates as substrates. The protein is DNA-directed RNA polymerase subunit beta' of Morus indica (Mulberry).